The primary structure comprises 166 residues: NAD(P)H-quinone oxidoreductase subunit I, chloroplastic (166 aa).

4Fe-4S ferredoxin-type domains lie at 55–84 (GRIHFEFDKCIACEVCVRVCPIDLPVVDWK) and 95–124 (LNYSIDFGICIFCGNCVEYCPTNCLSMTEE). [4Fe-4S] cluster contacts are provided by C64, C67, C70, C74, C104, C107, C110, and C114.

It belongs to the complex I 23 kDa subunit family. NDH is composed of at least 16 different subunits, 5 of which are encoded in the nucleus. It depends on [4Fe-4S] cluster as a cofactor.

It is found in the plastid. Its subcellular location is the chloroplast thylakoid membrane. The enzyme catalyses a plastoquinone + NADH + (n+1) H(+)(in) = a plastoquinol + NAD(+) + n H(+)(out). It catalyses the reaction a plastoquinone + NADPH + (n+1) H(+)(in) = a plastoquinol + NADP(+) + n H(+)(out). Functionally, NDH shuttles electrons from NAD(P)H:plastoquinone, via FMN and iron-sulfur (Fe-S) centers, to quinones in the photosynthetic chain and possibly in a chloroplast respiratory chain. The immediate electron acceptor for the enzyme in this species is believed to be plastoquinone. Couples the redox reaction to proton translocation, and thus conserves the redox energy in a proton gradient. The chain is NAD(P)H-quinone oxidoreductase subunit I, chloroplastic from Pentanema britannica (British yellowhead).